We begin with the raw amino-acid sequence, 45 residues long: uncharacterized protein (45 aa).

This is an uncharacterized protein from Archaeoglobus fulgidus (strain ATCC 49558 / DSM 4304 / JCM 9628 / NBRC 100126 / VC-16).